Consider the following 259-residue polypeptide: Small ribosomal subunit protein uS2 (259 aa).

Positions 228–259 (VSFGSEEAEENNQKEDNEEIFEIEDVDESEEM) are disordered. Acidic residues predominate over residues 233–259 (EEAEENNQKEDNEEIFEIEDVDESEEM).

It belongs to the universal ribosomal protein uS2 family.

This is Small ribosomal subunit protein uS2 from Thermosipho africanus (strain TCF52B).